A 480-amino-acid polypeptide reads, in one-letter code: Ribulose bisphosphate carboxylase large chain (480 aa).

A propeptide spanning residues 1–2 is cleaved from the precursor; that stretch reads MS. Pro3 is subject to N-acetylproline. Lys14 carries the N6,N6,N6-trimethyllysine modification. Positions 123 and 173 each coordinate substrate. Lys175 serves as the catalytic Proton acceptor. Lys177 provides a ligand contact to substrate. Mg(2+) is bound by residues Lys201, Asp203, and Glu204. Lys201 is modified (N6-carboxylysine). His294 acts as the Proton acceptor in catalysis. Substrate-binding residues include Arg295, His327, and Ser379.

It belongs to the RuBisCO large chain family. Type I subfamily. In terms of assembly, heterohexadecamer of 8 large chains and 8 small chains; disulfide-linked. The disulfide link is formed within the large subunit homodimers. Requires Mg(2+) as cofactor. Post-translationally, the disulfide bond which can form in the large chain dimeric partners within the hexadecamer appears to be associated with oxidative stress and protein turnover.

Its subcellular location is the plastid. The protein resides in the chloroplast. The enzyme catalyses 2 (2R)-3-phosphoglycerate + 2 H(+) = D-ribulose 1,5-bisphosphate + CO2 + H2O. The catalysed reaction is D-ribulose 1,5-bisphosphate + O2 = 2-phosphoglycolate + (2R)-3-phosphoglycerate + 2 H(+). Its function is as follows. RuBisCO catalyzes two reactions: the carboxylation of D-ribulose 1,5-bisphosphate, the primary event in carbon dioxide fixation, as well as the oxidative fragmentation of the pentose substrate in the photorespiration process. Both reactions occur simultaneously and in competition at the same active site. The sequence is that of Ribulose bisphosphate carboxylase large chain from Rivina humilis (Rougeplant).